A 395-amino-acid chain; its full sequence is Protein phosphatase PP2A regulatory subunit A (395 aa).

HEAT repeat units follow at residues 44–81 (DCLA…AVGP), 83–120 (STKT…ILSP), 122–159 (LAIQ…VLGK), 161–198 (ATIE…VIGI), 200–237 (LLSQ…QLGV), 239–276 (FFDD…EEFG), 279–316 (WAMQ…VLGS), and 318–355 (ITST…IVDE).

This sequence belongs to the phosphatase 2A regulatory subunit A family. As to quaternary structure, PP2A exists in several trimeric forms, all of which consist of a core composed of a catalytic subunit associated with a 65 kDa regulatory subunit (PR65) (subunit A). The core complex associates with a third, variable subunit (subunit B), which confers distinct properties to the holoenzyme.

Functionally, the PR65 subunit of protein phosphatase 2A serves as a scaffolding molecule to coordinate the assembly of the catalytic subunit and a variable regulatory B subunit. This chain is Protein phosphatase PP2A regulatory subunit A, found in Pisum sativum (Garden pea).